The primary structure comprises 137 residues: 1,4-dihydroxy-2-naphthoyl-CoA hydrolase (137 aa).

Asp-12 is an active-site residue.

This sequence belongs to the 4-hydroxybenzoyl-CoA thioesterase family. DHNA-CoA hydrolase subfamily.

It carries out the reaction 1,4-dihydroxy-2-naphthoyl-CoA + H2O = 1,4-dihydroxy-2-naphthoate + CoA + H(+). The protein operates within cofactor biosynthesis; phylloquinone biosynthesis. It functions in the pathway quinol/quinone metabolism; 1,4-dihydroxy-2-naphthoate biosynthesis; 1,4-dihydroxy-2-naphthoate from chorismate: step 7/7. In terms of biological role, catalyzes the hydrolysis of 1,4-dihydroxy-2-naphthoyl-CoA (DHNA-CoA) to 1,4-dihydroxy-2-naphthoate (DHNA), a reaction involved in phylloquinone (vitamin K1) biosynthesis. The protein is 1,4-dihydroxy-2-naphthoyl-CoA hydrolase of Acaryochloris marina (strain MBIC 11017).